A 182-amino-acid polypeptide reads, in one-letter code: Ribulose bisphosphate carboxylase small subunit, chloroplastic 4 (182 aa).

A chloroplast-targeting transit peptide spans 1-41 (MSAAMMNKSVVLSKQCTKPAATPKVVTSKRSFASTVANKNR).

It belongs to the RuBisCO small chain family. In terms of assembly, heterohexadecamer of 8 large and 8 small subunits.

It is found in the plastid. The protein localises to the chloroplast. In terms of biological role, ruBisCO catalyzes two reactions: the carboxylation of D-ribulose 1,5-bisphosphate, the primary event in carbon dioxide fixation, as well as the oxidative fragmentation of the pentose substrate. Both reactions occur simultaneously and in competition at the same active site. Although the small subunit is not catalytic it is essential for maximal activity. In Acetabularia acetabulum (Mermaid's wine glass), this protein is Ribulose bisphosphate carboxylase small subunit, chloroplastic 4.